A 1409-amino-acid chain; its full sequence is Receptor-type tyrosine-protein phosphatase (1409 aa).

A signal peptide spans 1-22 (MRINRWIWWATVILLYLRTGLA). The Extracellular segment spans residues 23 to 712 (ADFFRSSEEN…LLDTESSSSG (690 aa)). The interval 32-53 (NDRKSSDDLDNFNSTKIEPDKP) is disordered. Positions 159–267 (PTKCDKRDLA…TASASDLDVT (109 aa)) constitute an Ig-like C2-type domain. The cysteines at positions 189 and 255 are disulfide-linked. Fibronectin type-III domains lie at 276 to 366 (APRQ…TKQK) and 372 to 502 (KEED…AQPD). A helical membrane pass occupies residues 713–733 (FGIFMKIILPFLLFLAFATGV). Over 734–1409 (TMFFVNRKGH…LADYISKTYR (676 aa)) the chain is Cytoplasmic. 2 Tyrosine-protein phosphatase domains span residues 793-1072 (FAQE…LAEW) and 1135-1403 (LEEE…LADY). Catalysis depends on phosphocysteine intermediate residues Cys1013 and Cys1344.

It belongs to the protein-tyrosine phosphatase family. Receptor class 2A subfamily. In terms of tissue distribution, expressed in muscles, hypodermis and a subset of neurons. Expressed in the AVA neurons, with high expression in the anterior half of the preanal ganglion where AVA neurons contact the PHB neurons.

It localises to the cell membrane. The protein resides in the synapse. It carries out the reaction O-phospho-L-tyrosyl-[protein] + H2O = L-tyrosyl-[protein] + phosphate. In terms of biological role, possesses an intrinsic protein tyrosine phosphatase (PTPase) activity. Regulates egl-15 activity which is required for hypodermis-mediated fluid homeostasis and protein degradation in muscle. During the formation of neuromuscular junctions at the larval stage, negatively regulates membrane protrusion from body wall muscles. Plays a role in nicotinic acetylcholine receptor (nAChR)-mediated sensitivity to nicotine. Regulates synaptic levels of nAchR subunit lev-1 in the nerve cord. Promotes the outgrowth of the quaternary dendritic branches of the PVD sensory neurons. In parallel to the sax-7/mnr-1 pathway, also controls the extension of the PVD primary branches. Acts in the netrin/DCC pathway to mediate the formation of synapses between the AVA interneurons and the PHB sensory neurons. Also required for the formation of synapses between the AVA interneurons and the VA10 motor neurons. The chain is Receptor-type tyrosine-protein phosphatase from Caenorhabditis elegans.